We begin with the raw amino-acid sequence, 166 residues long: Plastocyanin, chloroplastic (166 aa).

The N-terminal 67 residues, 1–67, are a transit peptide targeting the chloroplast; sequence MASLTSAAVT…GAVLASNALA (67 aa). The region spanning 68–166 is the Plastocyanin-like domain; the sequence is VEVLLGGSDG…AGMAGKITVN (99 aa). Cu cation is bound by residues H104, C151, H154, and M159.

Belongs to the plastocyanin family. Cu(2+) serves as cofactor.

Its subcellular location is the plastid. The protein resides in the chloroplast thylakoid membrane. In terms of biological role, participates in electron transfer between P700 and the cytochrome b6-f complex in photosystem I. This Fritillaria agrestis (Stinkbells) protein is Plastocyanin, chloroplastic (PETE).